A 262-amino-acid chain; its full sequence is MTFLAILFVIAVLLLLAQLPVIGFYIRAVYFGMCLIIGGFLGGLASIPFGKSPNNHFRMFKIFQAMTWPMGVRFELRNSEILHDKKPYIIIANHQSALDVLGMSFAWPVDCVVMLKSSLKYLPGFNLCAYLCDSVYINRFSKEKALKTVDTTLHEIVTKKRKVWIYPEGTRNAEPELLPFKKGAFILAKQAKIPIVPCVFSSHKFFYSHAEKRLTSGNCIIDILPEVDSSKFDSIDDLSAHCRKIMQAHREKLDAEAANLNI.

3 helical membrane-spanning segments follow: residues 3-23 (FLAI…PVIG), 29-49 (VYFG…SIPF), and 89-109 (IIIA…AWPV). Residues 94-99 (HQSALD) carry the HXXXXD motif motif.

This sequence belongs to the 1-acyl-sn-glycerol-3-phosphate acyltransferase family.

It is found in the membrane. The enzyme catalyses a 1-acyl-sn-glycero-3-phosphate + an acyl-CoA = a 1,2-diacyl-sn-glycero-3-phosphate + CoA. It participates in phospholipid metabolism; CDP-diacylglycerol biosynthesis; CDP-diacylglycerol from sn-glycerol 3-phosphate: step 2/3. Functionally, converts lysophosphatidic acid (LPA) into phosphatidic acid by incorporating an acyl moiety at the sn-2 position of the glycerol backbone. This is Putative 1-acyl-sn-glycerol-3-phosphate acyltransferase acl-1 (acl-1) from Caenorhabditis elegans.